The following is a 271-amino-acid chain: Mannosyl-3-phosphoglycerate phosphatase (271 aa).

The active-site Nucleophile is the Asp-13. Mg(2+) is bound by residues Asp-13, Asp-15, and Asp-214.

This sequence belongs to the HAD-like hydrolase superfamily. MPGP family. Mg(2+) serves as cofactor.

The protein localises to the cytoplasm. It carries out the reaction 2-O-(alpha-D-mannosyl)-3-phosphoglycerate + H2O = (2R)-2-O-(alpha-D-mannosyl)-glycerate + phosphate. The polypeptide is Mannosyl-3-phosphoglycerate phosphatase (Escherichia coli O17:K52:H18 (strain UMN026 / ExPEC)).